We begin with the raw amino-acid sequence, 470 residues long: Cell division protein FtsP (470 aa).

Positions 1–27 (MSLSRRQFIQASGIALCAGAVPLKASA) form a signal peptide, tat-type signal. Residues 68–164 (WGINGRYLGP…NGLAGMWLVE (97 aa)) enclose the Plastocyanin-like domain.

It belongs to the FtsP family. Post-translationally, exported by the Tat system. The position of the signal peptide cleavage has been experimentally proven. Can also be exported by the Sec system.

It is found in the periplasm. Its function is as follows. Cell division protein that is required for growth during stress conditions. May be involved in protecting or stabilizing the divisomal assembly under conditions of stress. The polypeptide is Cell division protein FtsP (Escherichia coli (strain K12)).